The primary structure comprises 508 residues: Photosystem II CP47 reaction center protein (508 aa).

A run of 6 helical transmembrane segments spans residues 21–36, 101–115, 140–156, 203–218, 237–252, and 457–472; these read AVHI…WAGS, IVFS…IWHW, GIHL…FGAF, IAAG…FHLS, VLSS…AFVV, and SFAL…HGSR.

It belongs to the PsbB/PsbC family. PsbB subfamily. PSII is composed of 1 copy each of membrane proteins PsbA, PsbB, PsbC, PsbD, PsbE, PsbF, PsbH, PsbI, PsbJ, PsbK, PsbL, PsbM, PsbT, PsbX, PsbY, PsbZ, Psb30/Ycf12, at least 3 peripheral proteins of the oxygen-evolving complex and a large number of cofactors. It forms dimeric complexes. The cofactor is Binds multiple chlorophylls. PSII binds additional chlorophylls, carotenoids and specific lipids..

The protein resides in the plastid. It is found in the chloroplast thylakoid membrane. One of the components of the core complex of photosystem II (PSII). It binds chlorophyll and helps catalyze the primary light-induced photochemical processes of PSII. PSII is a light-driven water:plastoquinone oxidoreductase, using light energy to abstract electrons from H(2)O, generating O(2) and a proton gradient subsequently used for ATP formation. In Populus trichocarpa (Western balsam poplar), this protein is Photosystem II CP47 reaction center protein.